The primary structure comprises 118 residues: Large ribosomal subunit protein bL21c (118 aa).

Belongs to the bacterial ribosomal protein bL21 family. In terms of assembly, part of the 50S ribosomal subunit.

The protein resides in the plastid. It localises to the chloroplast. In terms of biological role, this protein binds to 23S rRNA. In Psilotum nudum (Whisk fern), this protein is Large ribosomal subunit protein bL21c.